The chain runs to 616 residues: Chaperone protein HscA (616 aa).

It belongs to the heat shock protein 70 family.

In terms of biological role, chaperone involved in the maturation of iron-sulfur cluster-containing proteins. Has a low intrinsic ATPase activity which is markedly stimulated by HscB. Involved in the maturation of IscU. The sequence is that of Chaperone protein HscA from Shigella boydii serotype 18 (strain CDC 3083-94 / BS512).